Reading from the N-terminus, the 450-residue chain is tRNA-2-methylthio-N(6)-dimethylallyladenosine synthase (450 aa).

An MTTase N-terminal domain is found at 14-132; it reads GEFFIETWGC…FPNYLNEVKK (119 aa). [4Fe-4S] cluster is bound by residues cysteine 23, cysteine 59, cysteine 93, cysteine 169, cysteine 173, and cysteine 176. The 231-residue stretch at 155–385 folds into the Radical SAM core domain; sequence RKNSMKAFVT…VEVLNEISAK (231 aa). The TRAM domain maps to 388–450; it reads KAYEGKIEEV…NSFSLTGEEI (63 aa).

This sequence belongs to the methylthiotransferase family. MiaB subfamily. In terms of assembly, monomer. [4Fe-4S] cluster is required as a cofactor.

Its subcellular location is the cytoplasm. It catalyses the reaction N(6)-dimethylallyladenosine(37) in tRNA + (sulfur carrier)-SH + AH2 + 2 S-adenosyl-L-methionine = 2-methylsulfanyl-N(6)-dimethylallyladenosine(37) in tRNA + (sulfur carrier)-H + 5'-deoxyadenosine + L-methionine + A + S-adenosyl-L-homocysteine + 2 H(+). Catalyzes the methylthiolation of N6-(dimethylallyl)adenosine (i(6)A), leading to the formation of 2-methylthio-N6-(dimethylallyl)adenosine (ms(2)i(6)A) at position 37 in tRNAs that read codons beginning with uridine. This chain is tRNA-2-methylthio-N(6)-dimethylallyladenosine synthase, found in Clostridium botulinum (strain ATCC 19397 / Type A).